A 201-amino-acid chain; its full sequence is Large ribosomal subunit protein bL25 (201 aa).

This sequence belongs to the bacterial ribosomal protein bL25 family. CTC subfamily. As to quaternary structure, part of the 50S ribosomal subunit; part of the 5S rRNA/L5/L18/L25 subcomplex. Contacts the 5S rRNA. Binds to the 5S rRNA independently of L5 and L18.

In terms of biological role, this is one of the proteins that binds to the 5S RNA in the ribosome where it forms part of the central protuberance. This Chlorobaculum parvum (strain DSM 263 / NCIMB 8327) (Chlorobium vibrioforme subsp. thiosulfatophilum) protein is Large ribosomal subunit protein bL25.